Consider the following 204-residue polypeptide: High frequency lysogenization protein HflD homolog (204 aa).

It belongs to the HflD family.

It localises to the cytoplasm. The protein localises to the cell inner membrane. The protein is High frequency lysogenization protein HflD homolog of Ruthia magnifica subsp. Calyptogena magnifica.